A 1214-amino-acid polypeptide reads, in one-letter code: Genome polyprotein (1214 aa).

The SF3 helicase domain occupies 1-55 (NKGKTFTSKYVIMTSNTETPVKPTSRRAGAFYRRVMIVDVTNNAVEKWKSDNPGK). O-(5'-phospho-RNA)-tyrosine is present on Tyr-428. The Peptidase C24 domain occupies 523–676 (GVAHKNAIVS…KLIVPYAKVD (154 aa)). Catalysis depends on for 3CLpro activity residues His-557, Glu-578, and Cys-640. Residues 926 to 1051 (HDRYCVDYSK…IVPPLISSVM (126 aa)) enclose the RdRp catalytic domain.

In terms of processing, specific enzymatic cleavages in vivo yield mature proteins. Pro-Pol is first autocatalytically cleaved, then processes the whole polyprotein. Post-translationally, VPg is uridylylated by the polymerase and is covalently attached to the 5'-end of the polyadenylated genomic and subgenomic RNAs. This uridylylated form acts as a nucleotide-peptide primer for the polymerase.

It carries out the reaction a ribonucleoside 5'-triphosphate + H2O = a ribonucleoside 5'-diphosphate + phosphate + H(+). The enzyme catalyses RNA(n) + a ribonucleoside 5'-triphosphate = RNA(n+1) + diphosphate. The catalysed reaction is Endopeptidase with a preference for cleavage when the P1 position is occupied by Glu-|-Xaa and the P1' position is occupied by Gly-|-Yaa.. Functionally, NTPase presumably plays a role in replication. Despite having similarities with helicases, does not seem to display any helicase activity. Its function is as follows. Viral genome-linked protein is covalently linked to the 5'-end of the positive-strand, negative-strand genomic RNAs and subgenomic RNA. Acts as a genome-linked replication primer. May recruit ribosome to viral RNA thereby promoting viral proteins translation. Protease-polymerase p76 processes the polyprotein: Pro-Pol is first released by autocleavage, then all other proteins are cleaved. Cleaves host translation initiation factor eIF4G1 and eIF4G2 thereby inducing a shutdown of host protein synthesis. This shutdown may not prevent viral mRNA from being translated since viral Vpg replaces the cap. May cleave host polyadenylate-binding protein thereby inhibiting cellular translation. It is also an RNA-directed RNA polymerase which replicates genomic and antigenomic viral RNA by recognizing specific signals. Also transcribes a subgenomic mRNA by initiating RNA synthesis internally on antigenomic RNA. This sgRNA codes for structural proteins. Catalyzes the covalent attachment VPg with viral RNAs. This is Genome polyprotein from San Miguel sea lion virus serotype 4 (SMSV-4).